The following is an 88-amino-acid chain: U-scoloptoxin(XY)-Er1a (88 aa).

The N-terminal stretch at 1–24 (MASQVVLSFALVVVLAVFVGQVDS) is a signal peptide. Residues 66-88 (RPELSPGAWDDSSEEKDNEASLA) are disordered. Residues 79 to 88 (EEKDNEASLA) constitute a propeptide that is removed on maturation.

It belongs to the scoloptoxin-XY family. In terms of processing, contains 3 disulfide bonds. Expressed by the venom gland.

It is found in the secreted. This Ethmostigmus rubripes (Giant centipede) protein is U-scoloptoxin(XY)-Er1a.